A 125-amino-acid polypeptide reads, in one-letter code: Cu-Zn superoxide dismutase-like protein (125 aa).

A disulfide bridge connects residues C52 and C102.

It belongs to the Cu-Zn superoxide dismutase family.

Its subcellular location is the host cytoplasm. Virion protein with no enzymatic activity. The sequence is that of Cu-Zn superoxide dismutase-like protein from Bos taurus (Bovine).